Consider the following 365-residue polypeptide: Protein YIM1 (365 aa).

This sequence belongs to the YIM1 family.

It localises to the lipid droplet. The protein localises to the mitochondrion. This is Protein YIM1 (YIM1) from Saccharomyces cerevisiae (strain RM11-1a) (Baker's yeast).